A 461-amino-acid polypeptide reads, in one-letter code: Protein KlcB (461 aa).

Disordered regions lie at residues 84–107 and 349–379; these read PEAT…TEDK and RAKA…EDAP. Basic residues predominate over residues 91–101; that stretch reads ARRRTKARKSK. Positions 357-377 are enriched in basic and acidic residues; the sequence is GQRREPVTPAKPEPEPAKDED.

This Escherichia coli protein is Protein KlcB (klcB).